The chain runs to 116 residues: U30-theraphotoxin-Cg1a (116 aa).

The signal sequence occupies residues 1 to 17 (MKLCVLTIASLLVTVTS). Positions 18-53 (LETQKEIAEGSELTREETPSLVEHKEDEAAAASEKR) are excised as a propeptide. The tract at residues 24-46 (IAEGSELTREETPSLVEHKEDEA) is disordered. 4 disulfides stabilise this stretch: Cys-55–Cys-69, Cys-62–Cys-75, Cys-66–Cys-112, and Cys-68–Cys-88.

It belongs to the neurotoxin 03 (Tx2) family. 02 subfamily. HNTX-XV sub-subfamily. As to expression, expressed by the venom gland.

It localises to the secreted. Functionally, probable ion channel inhibitor. The protein is U30-theraphotoxin-Cg1a of Chilobrachys guangxiensis (Chinese earth tiger tarantula).